The sequence spans 234 residues: Purine nucleoside phosphorylase DeoD-type (234 aa).

His4 is a binding site for a purine D-ribonucleoside. Residues Gly20, Arg24, Arg43, and 87–90 (RIGT) each bind phosphate. Residues 179–181 (EME) and 203–204 (SD) each bind a purine D-ribonucleoside. Asp204 functions as the Proton donor in the catalytic mechanism.

Belongs to the PNP/UDP phosphorylase family. In terms of assembly, homohexamer; trimer of homodimers.

The catalysed reaction is a purine D-ribonucleoside + phosphate = a purine nucleobase + alpha-D-ribose 1-phosphate. It catalyses the reaction a purine 2'-deoxy-D-ribonucleoside + phosphate = a purine nucleobase + 2-deoxy-alpha-D-ribose 1-phosphate. Catalyzes the reversible phosphorolytic breakdown of the N-glycosidic bond in the beta-(deoxy)ribonucleoside molecules, with the formation of the corresponding free purine bases and pentose-1-phosphate. The sequence is that of Purine nucleoside phosphorylase DeoD-type from Helicobacter pylori (strain Shi470).